We begin with the raw amino-acid sequence, 634 residues long: Formate--tetrahydrofolate ligase (634 aa).

An ATP-binding site is contributed by 78–85; that stretch reads TPLGEGKS.

It belongs to the formate--tetrahydrofolate ligase family. As to quaternary structure, homodimer.

The enzyme catalyses (6S)-5,6,7,8-tetrahydrofolate + formate + ATP = (6R)-10-formyltetrahydrofolate + ADP + phosphate. The protein operates within one-carbon metabolism; tetrahydrofolate interconversion. The polypeptide is Formate--tetrahydrofolate ligase (THFS) (Arabidopsis thaliana (Mouse-ear cress)).